The sequence spans 435 residues: Enolase (435 aa).

Residue Q167 participates in (2R)-2-phosphoglycerate binding. E209 (proton donor) is an active-site residue. Mg(2+)-binding residues include D246, E291, and D318. Positions 343, 372, 373, and 394 each coordinate (2R)-2-phosphoglycerate. K343 (proton acceptor) is an active-site residue.

It belongs to the enolase family. Component of the RNA degradosome, a multiprotein complex involved in RNA processing and mRNA degradation. Requires Mg(2+) as cofactor.

The protein localises to the cytoplasm. It is found in the secreted. Its subcellular location is the cell surface. It carries out the reaction (2R)-2-phosphoglycerate = phosphoenolpyruvate + H2O. It functions in the pathway carbohydrate degradation; glycolysis; pyruvate from D-glyceraldehyde 3-phosphate: step 4/5. Catalyzes the reversible conversion of 2-phosphoglycerate (2-PG) into phosphoenolpyruvate (PEP). It is essential for the degradation of carbohydrates via glycolysis. In Psychromonas ingrahamii (strain DSM 17664 / CCUG 51855 / 37), this protein is Enolase.